Consider the following 262-residue polypeptide: [LysW]-aminoadipate/[LysW]-glutamate kinase (262 aa).

Substrate is bound by residues 35-36 (GG), arginine 62, and asparagine 167.

It belongs to the acetylglutamate kinase family. LysZ subfamily.

It localises to the cytoplasm. The enzyme catalyses [amino-group carrier protein]-C-terminal-N-(1,4-dicarboxybutan-1-yl)-L-glutamine + ATP = [amino-group carrier protein]-C-terminal-N-(1-carboxy-5-phosphooxy-5-oxopentan-1-yl)-L-glutamine + ADP. It carries out the reaction [amino-group carrier protein]-C-terminal-gamma-(L-glutamyl)-L-glutamate + ATP = [amino-group carrier protein]-C-terminal-gamma-(5-phospho-L-glutamyl)-L-glutamate + ADP. It functions in the pathway amino-acid biosynthesis; L-lysine biosynthesis via AAA pathway; L-lysine from L-alpha-aminoadipate (Thermus route): step 2/5. The protein operates within amino-acid biosynthesis; L-arginine biosynthesis. Functionally, involved in both the arginine and lysine biosynthetic pathways. Phosphorylates the LysW-bound precursors glutamate (for arginine biosynthesis), respectively alpha-aminoadipate (for lysine biosynthesis). This is [LysW]-aminoadipate/[LysW]-glutamate kinase from Metallosphaera sedula (strain ATCC 51363 / DSM 5348 / JCM 9185 / NBRC 15509 / TH2).